A 596-amino-acid polypeptide reads, in one-letter code: Leucine-rich repeat and IQ domain-containing protein 4 (596 aa).

22 LRR repeats span residues 22-44 (LPRL…LLRQ), 59-83 (LTDR…ILAL), 84-106 (KELE…IQQL), 108-129 (NTKV…LGAL), 130-152 (SSLE…VVSR), 153-176 (LRTL…ICKS), 177-200 (LHHL…IVNQ), 202-223 (KLRE…LCVL), 224-246 (YNLE…IGHL), 248-269 (RLQK…LSQC), 270-293 (SKLS…ELLT), 295-315 (LTEV…LCSW), 317-337 (SLHL…SFKR), 338-361 (LINL…ICAL), 362-384 (KNLE…ISLL), 385-407 (SNLK…IFSL), 410-433 (LEKL…IKRL), 434-457 (MNLK…GLMP), 459-479 (LEVL…ICRT), 480-502 (RNLR…LDHL), 504-525 (NLKV…VCNQ), and 527-549 (NEAI…TIQA). One can recognise an IQ domain in the interval 540 to 569 (RKMMATTIQAWWRGIMVRKGYGSYEELLKA). A compositionally biased stretch (basic residues) spans 569-587 (ARKKGKSPPKDKKGKKAAK). Residues 569-596 (ARKKGKSPPKDKKGKKAAKGKPEKGNKK) form a disordered region.

In Mus musculus (Mouse), this protein is Leucine-rich repeat and IQ domain-containing protein 4 (Lrriq4).